Here is a 375-residue protein sequence, read N- to C-terminus: Probable pectin lyase C (375 aa).

The signal sequence occupies residues 1–20 (MKITSTIPAVLLGLAPLSAA). Disulfide bonds link C83–C100 and C92–C220. Residue R250 is part of the active site. A disulfide bridge connects residues C317 and C325.

It belongs to the polysaccharide lyase 1 family.

The protein localises to the secreted. The catalysed reaction is Eliminative cleavage of (1-&gt;4)-alpha-D-galacturonan methyl ester to give oligosaccharides with 4-deoxy-6-O-methyl-alpha-D-galact-4-enuronosyl groups at their non-reducing ends.. Its function is as follows. Pectinolytic enzymes consist of four classes of enzymes: pectin lyase, polygalacturonase, pectin methylesterase and rhamnogalacturonase. Among pectinolytic enzymes, pectin lyase is the most important in depolymerization of pectin, since it cleaves internal glycosidic bonds of highly methylated pectins. The sequence is that of Probable pectin lyase C (pelC) from Aspergillus oryzae (strain ATCC 42149 / RIB 40) (Yellow koji mold).